We begin with the raw amino-acid sequence, 277 residues long: NADPH-dependent 7-cyano-7-deazaguanine reductase (277 aa).

Residue 83–85 coordinates substrate; sequence VES. 85–86 provides a ligand contact to NADPH; it reads SK. Cys-184 functions as the Thioimide intermediate in the catalytic mechanism. The active-site Proton donor is the Asp-191. 223–224 serves as a coordination point for substrate; sequence HE. 252–253 is a binding site for NADPH; it reads RG.

It belongs to the GTP cyclohydrolase I family. QueF type 2 subfamily. In terms of assembly, homodimer.

It is found in the cytoplasm. It catalyses the reaction 7-aminomethyl-7-carbaguanine + 2 NADP(+) = 7-cyano-7-deazaguanine + 2 NADPH + 3 H(+). Its pathway is tRNA modification; tRNA-queuosine biosynthesis. Catalyzes the NADPH-dependent reduction of 7-cyano-7-deazaguanine (preQ0) to 7-aminomethyl-7-deazaguanine (preQ1). The polypeptide is NADPH-dependent 7-cyano-7-deazaguanine reductase (Ralstonia nicotianae (strain ATCC BAA-1114 / GMI1000) (Ralstonia solanacearum)).